The sequence spans 146 residues: Large ribosomal subunit protein uL15 (146 aa).

Basic residues-rich tracts occupy residues 1–13 (MIRKRRKITRMRG) and 22–38 (SKKRRGAGHRGGRGQAG). The tract at residues 1-38 (MIRKRRKITRMRGSRTVGGGCSKKRRGAGHRGGRGQAG) is disordered.

This sequence belongs to the universal ribosomal protein uL15 family. In terms of assembly, part of the 50S ribosomal subunit.

In terms of biological role, binds to the 23S rRNA. In Methanothermobacter thermautotrophicus (strain ATCC 29096 / DSM 1053 / JCM 10044 / NBRC 100330 / Delta H) (Methanobacterium thermoautotrophicum), this protein is Large ribosomal subunit protein uL15.